A 202-amino-acid chain; its full sequence is Imidazole glycerol phosphate synthase subunit HisH 2 (202 aa).

The region spanning 1 to 202 is the Glutamine amidotransferase type-1 domain; that stretch reads MIVVIDYGVG…QLFKNFVELV (202 aa). Cys80 functions as the Nucleophile in the catalytic mechanism. Catalysis depends on residues His183 and Glu185.

Heterodimer of HisH and HisF.

The protein resides in the cytoplasm. The enzyme catalyses 5-[(5-phospho-1-deoxy-D-ribulos-1-ylimino)methylamino]-1-(5-phospho-beta-D-ribosyl)imidazole-4-carboxamide + L-glutamine = D-erythro-1-(imidazol-4-yl)glycerol 3-phosphate + 5-amino-1-(5-phospho-beta-D-ribosyl)imidazole-4-carboxamide + L-glutamate + H(+). It catalyses the reaction L-glutamine + H2O = L-glutamate + NH4(+). The protein operates within amino-acid biosynthesis; L-histidine biosynthesis; L-histidine from 5-phospho-alpha-D-ribose 1-diphosphate: step 5/9. In terms of biological role, IGPS catalyzes the conversion of PRFAR and glutamine to IGP, AICAR and glutamate. The HisH subunit catalyzes the hydrolysis of glutamine to glutamate and ammonia as part of the synthesis of IGP and AICAR. The resulting ammonia molecule is channeled to the active site of HisF. The chain is Imidazole glycerol phosphate synthase subunit HisH 2 (hisH2) from Pseudomonas aeruginosa (strain ATCC 15692 / DSM 22644 / CIP 104116 / JCM 14847 / LMG 12228 / 1C / PRS 101 / PAO1).